A 1338-amino-acid polypeptide reads, in one-letter code: Aldehyde oxidase (1338 aa).

The 2Fe-2S ferredoxin-type domain maps to 5–92 (SELLFYVNGR…GAAVTTVEGI (88 aa)). [2Fe-2S] cluster contacts are provided by Cys-44, Cys-49, Cys-52, and Cys-74. Residue Gln-113 participates in Mo-molybdopterin binding. Residues Cys-114, Cys-117, Cys-149, and Cys-151 each contribute to the [2Fe-2S] cluster site. A Mo-molybdopterin-binding site is contributed by Cys-151. The FAD-binding PCMH-type domain maps to 236 to 421 (FGSERMMWFS…VSVNIPYSRK (186 aa)). Residues 264–271 (VIMGNTSV), Ala-345, Ser-354, His-358, Asp-367, and Leu-411 contribute to the FAD site. Mo-molybdopterin is bound by residues 806-807 (AF) and Met-1047. Ser-1068 is modified (phosphoserine). Residues 1088 to 1091 (GSVV), Gln-1203, and Leu-1268 contribute to the Mo-molybdopterin site. The active-site Proton acceptor; for azaheterocycle hydroxylase activity is the Glu-1270.

The protein belongs to the xanthine dehydrogenase family. Homodimer. It depends on [2Fe-2S] cluster as a cofactor. FAD is required as a cofactor. Mo-molybdopterin serves as cofactor. In terms of tissue distribution, abundant in liver, expressed in adipose tissue and at lower levels in lung, skeletal muscle, pancreas. In contrast to mice, no significant gender difference in AOX1 expression level (at protein level).

It is found in the cytoplasm. The catalysed reaction is an aldehyde + O2 + H2O = a carboxylate + H2O2 + H(+). It carries out the reaction retinal + O2 + H2O = retinoate + H2O2 + H(+). Its activity is regulated as follows. Is very potently inhibited by raloxifene. Also inhibited by estradiol, ethinyl estradiol, hydralazine, menadione, isovanillin and thioridazine. Not inhibited by allopurinol, a xanthine dehydrogenase potent inhibitor. In terms of biological role, oxidase with broad substrate specificity, oxidizing aromatic azaheterocycles, such as N1-methylnicotinamide, N-methylphthalazinium and phthalazine, as well as aldehydes, such as benzaldehyde, retinal, pyridoxal, and vanillin. Plays a key role in the metabolism of xenobiotics and drugs containing aromatic azaheterocyclic substituents. Participates in the bioactivation of prodrugs such as famciclovir, catalyzing the oxidation step from 6-deoxypenciclovir to penciclovir, which is a potent antiviral agent. Is probably involved in the regulation of reactive oxygen species homeostasis. May be a prominent source of superoxide generation via the one-electron reduction of molecular oxygen. May also catalyze nitric oxide (NO) production via the reduction of nitrite to NO with NADH or aldehyde as electron donor. May play a role in adipogenesis. The sequence is that of Aldehyde oxidase from Homo sapiens (Human).